The chain runs to 168 residues: Thermonuclease (168 aa).

Positions 1–27 are cleaved as a signal peptide; the sequence is MKKITTGVLILAIAIVVLIFQYINGDG. Residues Arg-64, Glu-72, and Arg-114 contribute to the active site.

The protein belongs to the thermonuclease family. Ca(2+) serves as cofactor.

The protein localises to the secreted. The enzyme catalyses Endonucleolytic cleavage to nucleoside 3'-phosphates and 3'-phosphooligonucleotide end-products.. Enzyme that catalyzes the hydrolysis of both DNA and RNA at the 5'-position of the phosphodiester bond. In Staphylococcus intermedius, this protein is Thermonuclease (nucI).